The following is a 138-amino-acid chain: Acidic phospholipase A2 inhibitor vaspin A chain (138 aa).

Positions 1–16 are cleaved as a signal peptide; the sequence is MRTLWIVAVCLIGVEG. Cystine bridges form between Cys-42–Cys-131, Cys-44–Cys-60, Cys-59–Cys-111, Cys-65–Cys-138, Cys-66–Cys-104, Cys-73–Cys-97, and Cys-91–Cys-102.

The protein belongs to the phospholipase A2 family. Group II subfamily. D49 sub-subfamily. As to quaternary structure, heterodimer of a toxic basic protein having phospholipase A2 activity (B chain (AC Q8JFG0)) and a non-toxic acidic protein functioning as its inhibitor (A chain). In terms of tissue distribution, expressed by the venom gland.

The protein localises to the secreted. Its function is as follows. Heterodimer: postsynaptic neurotoxin. Monomer: the acidic chain inhibits the basic phospholipase A2 of the complex. In Vipera aspis aspis (Aspic viper), this protein is Acidic phospholipase A2 inhibitor vaspin A chain.